The sequence spans 37 residues: Large ribosomal subunit protein bL36 (37 aa).

It belongs to the bacterial ribosomal protein bL36 family.

In Trichlorobacter lovleyi (strain ATCC BAA-1151 / DSM 17278 / SZ) (Geobacter lovleyi), this protein is Large ribosomal subunit protein bL36.